The chain runs to 34 residues: Photosystem II reaction center protein M (34 aa).

Residues 5–25 traverse the membrane as a helical segment; it reads ILAFIATALFILIPTAFLLIL.

The protein belongs to the PsbM family. In terms of assembly, PSII is composed of 1 copy each of membrane proteins PsbA, PsbB, PsbC, PsbD, PsbE, PsbF, PsbH, PsbI, PsbJ, PsbK, PsbL, PsbM, PsbT, PsbX, PsbY, PsbZ, Psb30/Ycf12, at least 3 peripheral proteins of the oxygen-evolving complex and a large number of cofactors. It forms dimeric complexes.

The protein localises to the plastid. It is found in the chloroplast thylakoid membrane. Functionally, one of the components of the core complex of photosystem II (PSII). PSII is a light-driven water:plastoquinone oxidoreductase that uses light energy to abstract electrons from H(2)O, generating O(2) and a proton gradient subsequently used for ATP formation. It consists of a core antenna complex that captures photons, and an electron transfer chain that converts photonic excitation into a charge separation. This subunit is found at the monomer-monomer interface. This Angiopteris evecta (Mule's foot fern) protein is Photosystem II reaction center protein M.